A 304-amino-acid polypeptide reads, in one-letter code: MYNLYCTYMTGKRENVLIEALPYIREFHDSVMVIKVGGHAMVDPQVMSDIVQDIVLLRFVGIHPVIVHGGGPEITEKMDRMGKKSEFIGGLRITDDETMEIARMVLVGNINTRIVSLISKHGGKGVGLSGKDGNMILAKKKPTQKILIEDIEHDVDLGWVGDTEIINPEIINIVTANGYIPVISPIAMDSEGNALNINADTVAGDLADALNAKKLILMTDVPGVLRDQTDISTRISRIGVDEVEQLIEDGVLSGGMIPKMRSAKASVEGGVDRVHVIDGSISHSVLLELFTDQGIGTMVYKDTK.

Substrate-binding positions include 70-71 (GG), Arg92, and Asn196.

This sequence belongs to the acetylglutamate kinase family. ArgB subfamily.

The protein resides in the cytoplasm. The catalysed reaction is N-acetyl-L-glutamate + ATP = N-acetyl-L-glutamyl 5-phosphate + ADP. The protein operates within amino-acid biosynthesis; L-arginine biosynthesis; N(2)-acetyl-L-ornithine from L-glutamate: step 2/4. In terms of biological role, catalyzes the ATP-dependent phosphorylation of N-acetyl-L-glutamate. This is Acetylglutamate kinase from Methanococcoides burtonii (strain DSM 6242 / NBRC 107633 / OCM 468 / ACE-M).